The following is a 438-amino-acid chain: tRNA(Ile)-lysidine synthase (438 aa).

26 to 31 contributes to the ATP binding site; that stretch reads SGGADS.

The protein belongs to the tRNA(Ile)-lysidine synthase family.

It is found in the cytoplasm. The catalysed reaction is cytidine(34) in tRNA(Ile2) + L-lysine + ATP = lysidine(34) in tRNA(Ile2) + AMP + diphosphate + H(+). In terms of biological role, ligates lysine onto the cytidine present at position 34 of the AUA codon-specific tRNA(Ile) that contains the anticodon CAU, in an ATP-dependent manner. Cytidine is converted to lysidine, thus changing the amino acid specificity of the tRNA from methionine to isoleucine. The polypeptide is tRNA(Ile)-lysidine synthase (Parabacteroides distasonis (strain ATCC 8503 / DSM 20701 / CIP 104284 / JCM 5825 / NCTC 11152)).